We begin with the raw amino-acid sequence, 418 residues long: UDP-N-acetylglucosamine 1-carboxyvinyltransferase (418 aa).

Phosphoenolpyruvate is bound at residue 22 to 23; that stretch reads KN. Arg91 is a binding site for UDP-N-acetyl-alpha-D-glucosamine. Cys115 acts as the Proton donor in catalysis. Cys115 carries the post-translational modification 2-(S-cysteinyl)pyruvic acid O-phosphothioketal. UDP-N-acetyl-alpha-D-glucosamine contacts are provided by residues 120 to 124, Asp305, and Ile327; that span reads RPVDL.

The protein belongs to the EPSP synthase family. MurA subfamily.

It localises to the cytoplasm. The catalysed reaction is phosphoenolpyruvate + UDP-N-acetyl-alpha-D-glucosamine = UDP-N-acetyl-3-O-(1-carboxyvinyl)-alpha-D-glucosamine + phosphate. It participates in cell wall biogenesis; peptidoglycan biosynthesis. Its function is as follows. Cell wall formation. Adds enolpyruvyl to UDP-N-acetylglucosamine. In Wigglesworthia glossinidia brevipalpis, this protein is UDP-N-acetylglucosamine 1-carboxyvinyltransferase.